Here is a 392-residue protein sequence, read N- to C-terminus: Formate-dependent phosphoribosylglycinamide formyltransferase (392 aa).

N(1)-(5-phospho-beta-D-ribosyl)glycinamide-binding positions include 20–21 (EL) and E80. ATP is bound by residues R112, K153, 158–163 (SSGKGQ), 193–196 (EGFV), and E201. The region spanning 117–306 (RLAAETLGLP…EFALHVRAIL (190 aa)) is the ATP-grasp domain. Residues E265 and E277 each coordinate Mg(2+). N(1)-(5-phospho-beta-D-ribosyl)glycinamide contacts are provided by residues D284, K355, and 362-363 (RR).

Belongs to the PurK/PurT family. Homodimer.

It catalyses the reaction N(1)-(5-phospho-beta-D-ribosyl)glycinamide + formate + ATP = N(2)-formyl-N(1)-(5-phospho-beta-D-ribosyl)glycinamide + ADP + phosphate + H(+). It functions in the pathway purine metabolism; IMP biosynthesis via de novo pathway; N(2)-formyl-N(1)-(5-phospho-D-ribosyl)glycinamide from N(1)-(5-phospho-D-ribosyl)glycinamide (formate route): step 1/1. Its function is as follows. Involved in the de novo purine biosynthesis. Catalyzes the transfer of formate to 5-phospho-ribosyl-glycinamide (GAR), producing 5-phospho-ribosyl-N-formylglycinamide (FGAR). Formate is provided by PurU via hydrolysis of 10-formyl-tetrahydrofolate. This chain is Formate-dependent phosphoribosylglycinamide formyltransferase, found in Aeromonas hydrophila subsp. hydrophila (strain ATCC 7966 / DSM 30187 / BCRC 13018 / CCUG 14551 / JCM 1027 / KCTC 2358 / NCIMB 9240 / NCTC 8049).